Consider the following 89-residue polypeptide: Small ribosomal subunit protein uS15 (89 aa).

It belongs to the universal ribosomal protein uS15 family. Part of the 30S ribosomal subunit. Forms a bridge to the 50S subunit in the 70S ribosome, contacting the 23S rRNA.

In terms of biological role, one of the primary rRNA binding proteins, it binds directly to 16S rRNA where it helps nucleate assembly of the platform of the 30S subunit by binding and bridging several RNA helices of the 16S rRNA. Forms an intersubunit bridge (bridge B4) with the 23S rRNA of the 50S subunit in the ribosome. This is Small ribosomal subunit protein uS15 from Thermobifida fusca (strain YX).